Consider the following 306-residue polypeptide: Porphobilinogen deaminase (306 aa).

At C240 the chain carries S-(dipyrrolylmethanemethyl)cysteine.

Belongs to the HMBS family. As to quaternary structure, monomer. Requires dipyrromethane as cofactor.

The catalysed reaction is 4 porphobilinogen + H2O = hydroxymethylbilane + 4 NH4(+). It participates in porphyrin-containing compound metabolism; protoporphyrin-IX biosynthesis; coproporphyrinogen-III from 5-aminolevulinate: step 2/4. In terms of biological role, tetrapolymerization of the monopyrrole PBG into the hydroxymethylbilane pre-uroporphyrinogen in several discrete steps. The protein is Porphobilinogen deaminase of Syntrophomonas wolfei subsp. wolfei (strain DSM 2245B / Goettingen).